Reading from the N-terminus, the 676-residue chain is Electrogenic aspartate/glutamate antiporter SLC25A13, mitochondrial (676 aa).

At Ala-2 the chain carries N-acetylalanine. The regulatory N-terminal domain stretch occupies residues 2–295; sequence AAAKVALTKR…TLADIERIAP (294 aa). Over 2-332 the chain is Mitochondrial intermembrane; that stretch reads AAAKVALTKR…LLQLAESAYR (331 aa). Lys-18 is subject to N6-acetyllysine. 4 EF-hand domains span residues 51–86, 87–122, 123–157, and 158–193; these read SQPNPKTVELLSGVVDQTKDGLISFQEFVAFESVLC, APDALFMVAFQLFDKAGKGEVTFEDVKQIFGQTTIH, QHIPFNWDSEFVQLHFGKERKRHLTYAEFTQFLLE, and IQLEHAKQAFVQRDNAKTGKVSAIDFRDIMVTIRPH. Ca(2+) is bound by residues Asp-66, Thr-68, Asp-70, Leu-72, and Glu-77. Positions 296–311 are linker loop domain; it reads LEEGMLPFNLAEAQRQ. Positions 322 to 613 are carrier domain; it reads FLLQLAESAY…LQRWFYVDFG (292 aa). Solcar repeat units follow at residues 327–419, 427–511, and 519–607; these read AESA…VRDK, VPLL…VKAS, and VSPG…LQRW. A helical membrane pass occupies residues 333–350; sequence FGLGSIAGAVGATAVYPI. The Mitochondrial matrix portion of the chain corresponds to 351-393; the sequence is DLVKTRMQNQRSTGSFVGELMYKNSFDCFKKVLRYEGFFGLYR. Residues Lys-354 and Lys-373 each carry the N6-acetyllysine modification. Residues 394–413 form a helical membrane-spanning segment; the sequence is GLLPQLLGVAPEKAIKLTVN. Topologically, residues 414-436 are mitochondrial intermembrane; the sequence is DFVRDKFMHKDGSVPLLAEIFAG. A helical membrane pass occupies residues 437–450; it reads GCAGGSQVIFTNPL. Residues 451 to 485 lie on the Mitochondrial matrix side of the membrane; that stretch reads EIVKIRLQVAGEITTGPRVSALSVVRDLGFFGIYK. N6-methyllysine is present on Lys-454. Lys-485 bears the N6-acetyllysine; alternate mark. An N6-succinyllysine; alternate modification is found at Lys-485. The helical transmembrane segment at 486-505 threads the bilayer; that stretch reads GAKACFLRDIPFSAIYFPCY. Over 506–524 the chain is Mitochondrial intermembrane; sequence AHVKASFANEDGQVSPGSL. Residues 525 to 542 traverse the membrane as a helical segment; sequence LLAGAIAGMPAASLVTPA. At 543-581 the chain is on the mitochondrial matrix side; it reads DVIKTRLQVAARAGQTTYNGVTDCFRKILREEGPKALWK. Lys-581 is modified (N6-succinyllysine). A helical transmembrane segment spans residues 582-601; it reads GVAARVFRSSPQFGVTLLTY. Over 602–676 the chain is Mitochondrial intermembrane; it reads ELLQRWFYVD…STSKVTAGDS (75 aa). Residues 614–676 are C-terminal domain; that stretch reads GVKPVGSEPV…STSKVTAGDS (63 aa). Lys-663 carries the N6-acetyllysine modification. Ser-667 bears the Phosphoserine mark.

The protein belongs to the mitochondrial carrier (TC 2.A.29) family. In terms of assembly, homodimer (via N-terminus). As to expression, at 10.5 dpc, expressed in branchial arches, a well as in the limb and tail buds. At 13.5 dpc expression is predominant in epithelial structures and the forebrain, kidney and liver. Expression in liver is maintained into adulthood.

It is found in the mitochondrion inner membrane. It carries out the reaction L-aspartate(in) + L-glutamate(out) + H(+)(out) = L-aspartate(out) + L-glutamate(in) + H(+)(in). The enzyme catalyses 3-sulfino-L-alanine(out) + L-glutamate(in) + H(+)(in) = 3-sulfino-L-alanine(in) + L-glutamate(out) + H(+)(out). The catalysed reaction is 3-sulfino-L-alanine(out) + L-aspartate(in) = 3-sulfino-L-alanine(in) + L-aspartate(out). Its function is as follows. Mitochondrial electrogenic aspartate/glutamate antiporter that favors efflux of aspartate and entry of glutamate and proton within the mitochondria as part of the malate-aspartate shuttle. Also mediates the uptake of L-cysteinesulfinate (3-sulfino-L-alanine) by mitochondria in exchange of L-glutamate and proton. Can also exchange L-cysteinesulfinate with aspartate in their anionic form without any proton translocation. Lacks transport activity towards gamma-aminobutyric acid (GABA). The chain is Electrogenic aspartate/glutamate antiporter SLC25A13, mitochondrial from Mus musculus (Mouse).